Reading from the N-terminus, the 500-residue chain is Maturase K (500 aa).

This sequence belongs to the intron maturase 2 family. MatK subfamily.

The protein localises to the plastid. It localises to the chloroplast. Functionally, usually encoded in the trnK tRNA gene intron. Probably assists in splicing its own and other chloroplast group II introns. The chain is Maturase K from Brasenia schreberi (Water shield).